Consider the following 330-residue polypeptide: Phospho-N-acetylmuramoyl-pentapeptide-transferase (330 aa).

Transmembrane regions (helical) follow at residues 3–23, 49–69, 71–91, 111–131, 145–165, 179–199, 204–224, 228–248, 256–276, and 307–327; these read SVVL…SSFI, TPTM…AVVA, PNPA…VGLY, FLLL…YVGV, VLGP…FVIV, GLAA…AFLE, LAII…YNSH, IFMG…AAIL, PVIG…VVVF, and FWIV…FFLY.

Belongs to the glycosyltransferase 4 family. MraY subfamily. Mg(2+) is required as a cofactor.

The protein resides in the cell membrane. The catalysed reaction is UDP-N-acetyl-alpha-D-muramoyl-L-alanyl-gamma-D-glutamyl-meso-2,6-diaminopimeloyl-D-alanyl-D-alanine + di-trans,octa-cis-undecaprenyl phosphate = di-trans,octa-cis-undecaprenyl diphospho-N-acetyl-alpha-D-muramoyl-L-alanyl-D-glutamyl-meso-2,6-diaminopimeloyl-D-alanyl-D-alanine + UMP. It functions in the pathway cell wall biogenesis; peptidoglycan biosynthesis. Functionally, catalyzes the initial step of the lipid cycle reactions in the biosynthesis of the cell wall peptidoglycan: transfers peptidoglycan precursor phospho-MurNAc-pentapeptide from UDP-MurNAc-pentapeptide onto the lipid carrier undecaprenyl phosphate, yielding undecaprenyl-pyrophosphoryl-MurNAc-pentapeptide, known as lipid I. This is Phospho-N-acetylmuramoyl-pentapeptide-transferase from Rubrobacter xylanophilus (strain DSM 9941 / JCM 11954 / NBRC 16129 / PRD-1).